Consider the following 654-residue polypeptide: DNA-directed RNA polymerase III subunit RPC3 (654 aa).

Thr-27 bears the Phosphothreonine mark. Disordered stretches follow at residues 381–401 (LSRK…ASLP) and 422–448 (KSLQ…EDPH). Residues Ser-392 and Ser-394 each carry the phosphoserine modification. Acidic residues predominate over residues 429-444 (DTQEEDEEEEDLDADT). The interval 581–602 (LEWNMANLLFKKEKLKQENSTL) is leucine-zipper.

This sequence belongs to the RNA polymerase beta chain family. Component of the RNA polymerase III (Pol III) complex consisting of 17 subunits.

It is found in the cytoplasm. The protein resides in the nucleus. Functionally, DNA-dependent RNA polymerase catalyzes the transcription of DNA into RNA using the four ribonucleoside triphosphates as substrates. Specific core component of RNA polymerase III which synthesizes small RNAs, such as 5S rRNA and tRNAs. The chain is DNA-directed RNA polymerase III subunit RPC3 (RPC82) from Saccharomyces cerevisiae (strain YJM789) (Baker's yeast).